The chain runs to 930 residues: Dual serine/threonine and tyrosine protein kinase (930 aa).

Positions 1–14 (MEGDGVPWGSEPVS) are enriched in low complexity. A disordered region spans residues 1-22 (MEGDGVPWGSEPVSGPGPGGGG). Coiled coils occupy residues 190–216 (EEDL…MHHA) and 396–432 (RKKE…KEEL). The region spanning 653 to 907 (PKLGQELGRG…PLLGIVQPML (255 aa)) is the Protein kinase domain. ATP is bound by residues 659–667 (LGRGQYGVV) and K682. D778 serves as the catalytic Proton acceptor.

The protein belongs to the protein kinase superfamily. Ser/Thr protein kinase family.

The protein resides in the cytoplasm. It is found in the cell membrane. The protein localises to the apical cell membrane. Its subcellular location is the basolateral cell membrane. It localises to the cell junction. It carries out the reaction L-seryl-[protein] + ATP = O-phospho-L-seryl-[protein] + ADP + H(+). The enzyme catalyses L-threonyl-[protein] + ATP = O-phospho-L-threonyl-[protein] + ADP + H(+). The catalysed reaction is L-tyrosyl-[protein] + ATP = O-phospho-L-tyrosyl-[protein] + ADP + H(+). Acts as a positive regulator of ERK phosphorylation downstream of fibroblast growth factor-receptor activation. Involved in the regulation of both caspase-dependent apoptosis and caspase-independent cell death. In the skin, it plays a predominant role in suppressing caspase-dependent apoptosis in response to UV stress in a range of dermal cell types. This chain is Dual serine/threonine and tyrosine protein kinase (DSTYK), found in Pan troglodytes (Chimpanzee).